The following is a 500-amino-acid chain: GTPase Der (500 aa).

2 consecutive EngA-type G domains span residues P3–L166 and I211–T384. Residues G9–S16, D56–I60, N118–D121, G217–S224, D264–V268, and N329–D332 contribute to the GTP site. Positions K385–E469 constitute a KH-like domain. Residues S468–K500 are disordered. The span at Q486 to K500 shows a compositional bias: basic residues.

This sequence belongs to the TRAFAC class TrmE-Era-EngA-EngB-Septin-like GTPase superfamily. EngA (Der) GTPase family. In terms of assembly, associates with the 50S ribosomal subunit.

Functionally, GTPase that plays an essential role in the late steps of ribosome biogenesis. The sequence is that of GTPase Der from Aliivibrio fischeri (strain ATCC 700601 / ES114) (Vibrio fischeri).